Here is a 441-residue protein sequence, read N- to C-terminus: Gamma-glutamyl phosphate reductase (441 aa).

This sequence belongs to the gamma-glutamyl phosphate reductase family.

The protein resides in the cytoplasm. It carries out the reaction L-glutamate 5-semialdehyde + phosphate + NADP(+) = L-glutamyl 5-phosphate + NADPH + H(+). Its pathway is amino-acid biosynthesis; L-proline biosynthesis; L-glutamate 5-semialdehyde from L-glutamate: step 2/2. Its function is as follows. Catalyzes the NADPH-dependent reduction of L-glutamate 5-phosphate into L-glutamate 5-semialdehyde and phosphate. The product spontaneously undergoes cyclization to form 1-pyrroline-5-carboxylate. The sequence is that of Gamma-glutamyl phosphate reductase from Hydrogenobaculum sp. (strain Y04AAS1).